Reading from the N-terminus, the 454-residue chain is Cytochrome b-c1 complex subunit 2, mitochondrial (454 aa).

A mitochondrion-targeting transit peptide spans 1-35 (MISRSALSRGSQLALRRPAAAKTAQRGFAAAAASP).

Belongs to the peptidase M16 family. UQCRC2/QCR2 subfamily. Component of the ubiquinol-cytochrome c oxidoreductase (cytochrome b-c1 complex, complex III, CIII), a multisubunit enzyme composed of 10 subunits. The complex is composed of 3 respiratory subunits cytochrome b (cob), cytochrome c1 (cyt-1) and Rieske protein (fes-1), 2 core protein subunits pep and ucr-1, and 5 low-molecular weight protein subunits qcr6, qcr7, qcr8, qcr9 and probably NCU16844/qcr10. The complex exists as an obligatory dimer and forms supercomplexes (SCs) in the inner mitochondrial membrane with NADH-ubiquinone oxidoreductase (complex I, CI) and cytochrome c oxidase (complex IV, CIV), resulting in different assemblies (supercomplexes SCI(1)III(2), SCIII(2)IV(1) and SCIII(2)IV(2) as well as higher order I(x)III(y)IV(z) megacomplexes).

The protein localises to the mitochondrion inner membrane. Its function is as follows. Component of the ubiquinol-cytochrome c oxidoreductase, a multisubunit transmembrane complex that is part of the mitochondrial electron transport chain which drives oxidative phosphorylation. The respiratory chain contains 3 multisubunit complexes succinate dehydrogenase (complex II, CII), ubiquinol-cytochrome c oxidoreductase (cytochrome b-c1 complex, complex III, CIII) and cytochrome c oxidase (complex IV, CIV), that cooperate to transfer electrons derived from NADH and succinate to molecular oxygen, creating an electrochemical gradient over the inner membrane that drives transmembrane transport and the ATP synthase. The cytochrome b-c1 complex catalyzes electron transfer from ubiquinol to cytochrome c, linking this redox reaction to translocation of protons across the mitochondrial inner membrane, with protons being carried across the membrane as hydrogens on the quinol. In the process called Q cycle, 2 protons are consumed from the matrix, 4 protons are released into the intermembrane space and 2 electrons are passed to cytochrome c. The polypeptide is Cytochrome b-c1 complex subunit 2, mitochondrial (ucr-1) (Neurospora crassa (strain ATCC 24698 / 74-OR23-1A / CBS 708.71 / DSM 1257 / FGSC 987)).